A 193-amino-acid chain; its full sequence is Pyridoxal 5'-phosphate synthase subunit PdxT (193 aa).

An L-glutamine-binding site is contributed by 50–52 (GES). The Nucleophile role is filled by Cys82. L-glutamine-binding positions include Arg109 and 136–137 (IR). Residues His172 and Glu174 each act as charge relay system in the active site.

This sequence belongs to the glutaminase PdxT/SNO family. As to quaternary structure, in the presence of PdxS, forms a dodecamer of heterodimers. Only shows activity in the heterodimer.

The catalysed reaction is aldehydo-D-ribose 5-phosphate + D-glyceraldehyde 3-phosphate + L-glutamine = pyridoxal 5'-phosphate + L-glutamate + phosphate + 3 H2O + H(+). It catalyses the reaction L-glutamine + H2O = L-glutamate + NH4(+). It participates in cofactor biosynthesis; pyridoxal 5'-phosphate biosynthesis. Its function is as follows. Catalyzes the hydrolysis of glutamine to glutamate and ammonia as part of the biosynthesis of pyridoxal 5'-phosphate. The resulting ammonia molecule is channeled to the active site of PdxS. The protein is Pyridoxal 5'-phosphate synthase subunit PdxT of Streptococcus pneumoniae serotype 2 (strain D39 / NCTC 7466).